Consider the following 154-residue polypeptide: Superoxide dismutase [Cu-Zn] (154 aa).

Residues H47, H49, and H64 each contribute to the Cu cation site. C58 and C147 are oxidised to a cystine. Zn(2+) is bound by residues H64, H72, H81, and D84. Cu cation is bound at residue H121. R144 lines the substrate pocket.

The protein belongs to the Cu-Zn superoxide dismutase family. In terms of assembly, homodimer. Cu cation is required as a cofactor. The cofactor is Zn(2+).

The protein resides in the cytoplasm. The enzyme catalyses 2 superoxide + 2 H(+) = H2O2 + O2. Its function is as follows. Destroys radicals which are normally produced within the cells and which are toxic to biological systems. The sequence is that of Superoxide dismutase [Cu-Zn] (sod1) from Schizosaccharomyces pombe (strain 972 / ATCC 24843) (Fission yeast).